The sequence spans 194 residues: Ras-related protein RabU (194 aa).

Residue 19–27 (GYDYECGIK) coordinates GTP. An Effector region motif is present at residues 42–50 (PESQVGVDF). GTP-binding positions include 68–72 (PQNKY) and 130–133 (NNSE).

Belongs to the small GTPase superfamily. Rab family.

This is Ras-related protein RabU (rabU) from Dictyostelium discoideum (Social amoeba).